A 167-amino-acid polypeptide reads, in one-letter code: I-Kappa-B like protein I1 (167 aa).

3 ANK repeats span residues 54 to 86 (HGKQCVHIVSNPGIADPQEKLKLLMEWGADING), 91 to 121 (FGNTPLHIAAYTQNHKLATWLCNQPGINMGI), and 125 to 154 (LFKTPYYVACERHDIKIMNILRAKGGQCRI).

Belongs to the polydnaviridae I-Kappa-B-like protein family.

Suppresses the host immune response through NF-kappa-B inactivation. Possesses ankyrin repeat domains required for NF-kappa-B binding but lacks the regulatory regions required for dissociation from NF-kappa-B and degradation. Therefore, prevents host NF-kappa-B release and subsequent activation. The polypeptide is I-Kappa-B like protein I1 (I1) (Microplitis demolitor (Parasitoid wasp)).